The sequence spans 546 residues: Mercuric reductase (546 aa).

The region spanning Asn-2 to Gly-66 is the HMA domain. The a metal cation site is built by Cys-13 and Cys-16. Positions 96, 116, and 121 each coordinate FAD. Cys-122 and Cys-127 are joined by a disulfide. 2 residues coordinate FAD: Lys-131 and Ala-195. NAD(+)-binding positions include Gly-256 to Glu-263 and Gly-346. Residues Asp-387 and Val-395 each contribute to the FAD site. Cys-543 and Cys-544 together coordinate Hg(2+).

It belongs to the class-I pyridine nucleotide-disulfide oxidoreductase family. Homodimer. The cofactor is FAD.

It catalyses the reaction Hg + NADP(+) + H(+) = Hg(2+) + NADPH. Its activity is regulated as follows. Uses NADPH as the preferred electron donor, but shows slight activity with NADH as well. Inhibited by Cu(2+), Cd(2+), Zn(2+) and Co(2+), with Cu(2+) showing the strongest inhibition. Enzyme activity is enhanced by b-mercaptoethanol and NaCl up to concentrations of 500 uM and 100 mM respectively, followed by inhibition at higher concentrations. In terms of biological role, resistance to Hg(2+) in bacteria appears to be governed by a specialized system which includes mercuric reductase. MerA protein is responsible for volatilizing mercury as Hg(0). Catalyzes reduction of Hg(2+) to elemental Hg, which is volatile and can diffuse out of cells passively. Plays a pivotal role in mercury resistance and cell protection. This is Mercuric reductase from Lysinibacillus sphaericus (Bacillus sphaericus).